A 3707-amino-acid chain; its full sequence is CUB and sushi domain-containing protein 3 (3707 aa).

The segment at 1–21 (MKGIRKGESRAKESKPWEPGK) is disordered. The Cytoplasmic segment spans residues 1 to 42 (MKGIRKGESRAKESKPWEPGKRRCAKCGRLDFILMKKMGIKS). Residues 43–63 (GFTFWNLVFLLTVSCVKGFIY) form a helical membrane-spanning segment. At 64–3630 (TCGGTLKGLN…NQPHGTNSSS (3567 aa)) the chain is on the extracellular side. Cystine bridges form between Cys65/Cys91, Cys178/Cys218, Cys204/Cys235, and Cys241/Cys267. The 109-residue stretch at 65 to 173 (CGGTLKGLNG…HGFKVYYEEL (109 aa)) folds into the CUB 1 domain. Residues Asn73 and Asn90 are each glycosylated (N-linked (GlcNAc...) asparagine). One can recognise a Sushi 1 domain in the interval 176–237 (SSCGNPGVPP…WDFPVPICRA (62 aa)). One can recognise a CUB 2 domain in the interval 241–345 (CGGTMRGSSG…RGFSAPYQGS (105 aa)). Residues Asn361 and Asn409 are each glycosylated (N-linked (GlcNAc...) asparagine). The segment at 394-435 (QRVQVTSLRNSGLDPNTSKDGLSPHPADTQSTRRRPRHAEQI) is disordered. Residues 396–413 (VQVTSLRNSGLDPNTSKD) are compositionally biased toward polar residues. Residues 484-545 (NLCPDPGEPE…WSDHRPVCKV (62 aa)) enclose the Sushi 2 domain. Disulfide bonds link Cys486/Cys526, Cys512/Cys543, Cys548/Cys574, Cys664/Cys704, Cys690/Cys717, and Cys721/Cys747. The CUB 3 domain maps to 548-659 (CGSNLQGPSG…VGFKVNYKEI (112 aa)). A Sushi 3 domain is found at 662 to 719 (ESCGDPGTPLYGIREGDGFSNRDVLRFECQFGFELIGEKSIVCQENNQWSANIPICIF). A CUB 4 domain is found at 721 to 829 (CLSNFTAPMG…RGFNITYNTF (109 aa)). 2 N-linked (GlcNAc...) asparagine glycosylation sites follow: Asn724 and Asn823. Residues 832-893 (NECPDPGIPI…WSGLIPKCGA (62 aa)) enclose the Sushi 4 domain. Intrachain disulfides connect Cys834–Cys875, Cys860–Cys891, and Cys895–Cys921. The region spanning 895–1003 (CGGHFSAPSG…NGFKIHYESV (109 aa)) is the CUB 5 domain. Asn966 carries an N-linked (GlcNAc...) asparagine glycan. In terms of domain architecture, Sushi 5 spans 1008–1065 (YSCLDPGIPVHGRRYGHDFSIGSTVSFSCDSGYRLSHEEPLLCEKNHWWSHPLPTCDA). 3 disulfide bridges follow: Cys1010–Cys1050, Cys1036–Cys1063, and Cys1067–Cys1093. Residues 1067–1177 (CGGDVRGPSG…EGFNITFSEY (111 aa)) form the CUB 6 domain. Residues Asn1092, Asn1126, and Asn1171 are each glycosylated (N-linked (GlcNAc...) asparagine). The region spanning 1180 to 1239 (EPCEDPGIPQYGSRIGFNFGIGDTLTFSCSSGYRLEGTSEIICLGGGRRVWSAPLPRCVA) is the Sushi 6 domain. Cystine bridges form between Cys1182-Cys1222, Cys1208-Cys1237, and Cys1241-Cys1267. Positions 1241–1349 (CGASATNNEG…EGFQLVYTSF (109 aa)) constitute a CUB 7 domain. Residue Asn1280 is glycosylated (N-linked (GlcNAc...) asparagine). Positions 1352–1412 (SHCEDPGIPQ…WDYPLPSCIA (61 aa)) constitute a Sushi 7 domain. 12 disulfides stabilise this stretch: Cys1354–Cys1395, Cys1381–Cys1410, Cys1414–Cys1441, Cys1528–Cys1568, Cys1554–Cys1584, Cys1588–Cys1614, Cys1701–Cys1741, Cys1727–Cys1758, Cys1762–Cys1788, Cys1878–Cys1918, Cys1904–Cys1935, and Cys1939–Cys1965. The region spanning 1414–1523 (CGGRFKGESS…SGFAIQFSSS (110 aa)) is the CUB 8 domain. The Sushi 8 domain maps to 1526 to 1586 (TACRDPGVPM…WQPSPPVCIA (61 aa)). Asn1536 carries N-linked (GlcNAc...) asparagine glycosylation. The region spanning 1588 to 1696 (CGGNLTGSSG…TGFHLEYKAK (109 aa)) is the CUB 9 domain. Residues Asn1591 and Asn1709 are each glycosylated (N-linked (GlcNAc...) asparagine). The region spanning 1699–1760 (ESCFDPGNIM…WNRALPSCHA (62 aa)) is the Sushi 9 domain. The 109-residue stretch at 1762-1870 (CGSRSTGSEG…KGFHFVYQAV (109 aa)) folds into the CUB 10 domain. N-linked (GlcNAc...) asparagine glycosylation is present at Asn1781. One can recognise a Sushi 10 domain in the interval 1876–1937 (TQCSSVPEPR…WNDSLPTCIV (62 aa)). The N-linked (GlcNAc...) asparagine glycan is linked to Asn1929. Positions 1939 to 2047 (CGGILTKRKG…AGFHLEYTAI (109 aa)) constitute a CUB 11 domain. N-linked (GlcNAc...) asparagine glycosylation is present at Asn2019. The Sushi 11 domain maps to 2050–2109 (DSCPEPQTPSSGIKIGDRYMVGDVVSFQCDQGYSLQGHSHITCMPGPVRRWNYPIPICLA). Intrachain disulfides connect Cys2052–Cys2092, Cys2078–Cys2107, and Cys2111–Cys2137. In terms of domain architecture, CUB 12 spans 2111–2219 (CGGAMSDFSG…QGFHIVYQAY (109 aa)). The N-linked (GlcNAc...) asparagine glycan is linked to Asn2155. The Sushi 12 domain occupies 2222–2281 (QSCPDPRPFRNGFVIGNDFTVGQTISFECFPGYTLIGNSALTCLHGVSRNWNHPLPRCEA). Disulfide bonds link Cys2224–Cys2264, Cys2250–Cys2279, and Cys2283–Cys2309. Residues 2283-2394 (CGGNITAMNG…LSYHAYQLRV (112 aa)) enclose the CUB 13 domain. Asn2286, Asn2291, and Asn2324 each carry an N-linked (GlcNAc...) asparagine glycan. The region spanning 2393 to 2454 (RVCQPPPPVP…MDGAPPVCQV (62 aa)) is the Sushi 13 domain. Disulfide bonds link Cys2395-Cys2437, Cys2423-Cys2452, and Cys2456-Cys2484. One can recognise a CUB 14 domain in the interval 2456-2567 (CPANELRLDS…KGFRIRYIAF (112 aa)). N-linked (GlcNAc...) asparagine glycosylation is found at Asn2495 and Asn2537. Sushi domains are found at residues 2567–2629 (FYCS…ACQA), 2630–2691 (ISCG…RCVV), 2692–2756 (VTCP…YCQI), 2757–2814 (ISCG…RCLA), 2815–2872 (GHCG…SCVP), 2873–2930 (VSCG…MCKV), 2931–2992 (VNCS…ECIM), 2993–3050 (IDCG…HCSG), 3054–3111 (GTCG…ECKA), 3112–3170 (VQCG…NCTI), 3171–3230 (ISCG…TCRA), 3231–3288 (VTCP…QCLP), 3289–3346 (KFCG…HCIE), 3350–3408 (TSCE…ECIP), and 3409–3468 (HSCK…ICEA). 12 disulfides stabilise this stretch: Cys2569–Cys2610, Cys2596–Cys2627, Cys2632–Cys2674, Cys2658–Cys2689, Cys2694–Cys2739, Cys2725–Cys2754, Cys2759–Cys2799, Cys2785–Cys2812, Cys2817–Cys2857, Cys2843–Cys2870, Cys2875–Cys2915, and Cys2901–Cys2928. Residues Asn2711 and Asn2742 are each glycosylated (N-linked (GlcNAc...) asparagine). Asn2862 carries an N-linked (GlcNAc...) asparagine glycan. Asn2932 and Asn2952 each carry an N-linked (GlcNAc...) asparagine glycan. Cystine bridges form between Cys2933/Cys2977, Cys2963/Cys2990, Cys2995/Cys3035, Cys3021/Cys3048, Cys3056/Cys3096, Cys3082/Cys3109, Cys3114/Cys3155, Cys3141/Cys3168, Cys3173/Cys3215, Cys3199/Cys3228, Cys3233/Cys3273, Cys3259/Cys3286, Cys3291/Cys3331, Cys3317/Cys3344, Cys3352/Cys3393, Cys3379/Cys3406, Cys3411/Cys3453, and Cys3438/Cys3466. The N-linked (GlcNAc...) asparagine glycan is linked to Asn3099. N-linked (GlcNAc...) asparagine glycans are attached at residues Asn3158, Asn3167, Asn3194, Asn3208, and Asn3218. Asn3276 is a glycosylation site (N-linked (GlcNAc...) asparagine). The N-linked (GlcNAc...) asparagine glycan is linked to Asn3364. 5 N-linked (GlcNAc...) asparagine glycosylation sites follow: Asn3522, Asn3529, Asn3612, Asn3618, and Asn3627. A helical membrane pass occupies residues 3631–3651 (VAIAILVPFFALIFAGFGFYL). Topologically, residues 3652–3707 (YKQRTAPKTQYTGCSVHENNNGQAAFENPMYDTNAKSVEGKAVRFDPNLNTVCTMV) are cytoplasmic.

The protein belongs to the CSMD family. In terms of tissue distribution, weakly expressed in most tissues, except in brain. Expressed at intermediate level in brain, including cerebellum, substantia nigra, thalamus, spinal cord, hippocampus and fetal brain. Also expressed in testis.

The protein localises to the cell membrane. In terms of biological role, involved in dendrite development. The sequence is that of CUB and sushi domain-containing protein 3 (CSMD3) from Homo sapiens (Human).